Reading from the N-terminus, the 271-residue chain is Orotidine 5'-phosphate decarboxylase (271 aa).

Lysine 95 acts as the Proton donor in catalysis.

This sequence belongs to the OMP decarboxylase family. Type 2 subfamily.

The enzyme catalyses orotidine 5'-phosphate + H(+) = UMP + CO2. It functions in the pathway pyrimidine metabolism; UMP biosynthesis via de novo pathway; UMP from orotate: step 2/2. This is Orotidine 5'-phosphate decarboxylase from Janthinobacterium sp. (strain Marseille) (Minibacterium massiliensis).